The chain runs to 133 residues: MGFYQGPDNRKITGGLKGKHRDKRKYEIGNPSTLTTLSAEDIRTKDRTLGGNFKVRLKYTTTANVLDPATNTAKKVKILEVLETPANKELARRGIIIRGAKIRTEAGLAVVTSRPGQDGVINAVLLKNESQGS.

The interval 1-22 is disordered; sequence MGFYQGPDNRKITGGLKGKHRD.

It belongs to the eukaryotic ribosomal protein eS8 family. Part of the 30S ribosomal subunit.

In Saccharolobus islandicus (strain M.14.25 / Kamchatka #1) (Sulfolobus islandicus), this protein is Small ribosomal subunit protein eS8.